A 227-amino-acid polypeptide reads, in one-letter code: Transmembrane emp24 domain-containing protein 4 (227 aa).

An N-terminal signal peptide occupies residues 1–29 (MAGVGVGPLQGMVRFGLLVLTVCAACARG). The Lumenal portion of the chain corresponds to 30–194 (LYFHIGETEK…RLTSESTNQR (165 aa)). Residues 39–137 (KRCFIEEIPD…KLRVHLDIQV (99 aa)) form the GOLD domain. N-linked (GlcNAc...) asparagine glycosylation is present at Asn117. The stretch at 147 to 176 (IAAKDKLTELQLRARQLLDQVEQIQKEQDY) forms a coiled coil. The helical transmembrane segment at 195–212 (VLWWSIAQTVILILTGIW) threads the bilayer. Residues 213–227 (QMRHLKSFFEAKKLV) are Cytoplasmic-facing. Residues 220 to 221 (FF) carry the COPII vesicle coat-binding motif. A COPI vesicle coat-binding motif is present at residues 220 to 227 (FFEAKKLV).

This sequence belongs to the EMP24/GP25L family.

The protein localises to the endoplasmic reticulum membrane. Its function is as follows. Involved in vesicular protein trafficking, mainly in the early secretory pathway. Involved in the maintenance of the Golgi apparatus. Appears to play a role in the biosynthesis of secreted cargo including processing. Involved in endoplasmic reticulum stress response. May play a role in the regulation of heat-shock response and apoptosis. The protein is Transmembrane emp24 domain-containing protein 4 (Tmed4) of Mus musculus (Mouse).